A 277-amino-acid polypeptide reads, in one-letter code: Diaminopimelate epimerase (277 aa).

Residues Asn-11 and Asn-62 each coordinate substrate. Catalysis depends on Cys-71, which acts as the Proton donor. Substrate-binding positions include 72–73, Asn-160, Asn-193, and 211–212; these read GN and ER. Residue Cys-220 is the Proton acceptor of the active site. Substrate is bound at residue 221–222; sequence GT.

The protein belongs to the diaminopimelate epimerase family. In terms of assembly, homodimer.

Its subcellular location is the cytoplasm. It catalyses the reaction (2S,6S)-2,6-diaminopimelate = meso-2,6-diaminopimelate. It functions in the pathway amino-acid biosynthesis; L-lysine biosynthesis via DAP pathway; DL-2,6-diaminopimelate from LL-2,6-diaminopimelate: step 1/1. Its function is as follows. Catalyzes the stereoinversion of LL-2,6-diaminopimelate (L,L-DAP) to meso-diaminopimelate (meso-DAP), a precursor of L-lysine. This chain is Diaminopimelate epimerase, found in Methanococcus maripaludis (strain DSM 14266 / JCM 13030 / NBRC 101832 / S2 / LL).